The sequence spans 673 residues: Glycine--tRNA ligase beta subunit (673 aa).

The protein belongs to the class-II aminoacyl-tRNA synthetase family. As to quaternary structure, tetramer of two alpha and two beta subunits.

It is found in the cytoplasm. The catalysed reaction is tRNA(Gly) + glycine + ATP = glycyl-tRNA(Gly) + AMP + diphosphate. In Lactococcus lactis subsp. lactis (strain IL1403) (Streptococcus lactis), this protein is Glycine--tRNA ligase beta subunit.